Reading from the N-terminus, the 1761-residue chain is Probable serine/threonine-protein kinase DDB_G0282963 (1761 aa).

Disordered regions lie at residues proline 18–glutamine 47, glutamine 60–leucine 269, serine 322–asparagine 458, glutamine 545–glutamine 717, leucine 749–glutamine 783, alanine 798–alanine 830, threonine 842–phenylalanine 956, asparagine 972–threonine 997, isoleucine 1081–asparagine 1151, lysine 1179–glutamine 1305, alanine 1318–threonine 1343, and glutamine 1355–lysine 1459. 4 stretches are compositionally biased toward low complexity: residues glutamine 19–glutamine 47, glutamine 60–isoleucine 85, asparagine 92–leucine 105, and alanine 112–asparagine 237. Residues lysine 238 to glutamine 256 show a composition bias toward polar residues. Low complexity-rich tracts occupy residues serine 257–leucine 269, serine 322–threonine 341, glycine 348–valine 451, and asparagine 546–isoleucine 572. Positions methionine 573 to tyrosine 582 are enriched in polar residues. Positions asparagine 591–serine 627 are enriched in low complexity. The segment covering serine 633–aspartate 643 has biased composition (acidic residues). Composition is skewed to low complexity over residues asparagine 674 to threonine 697, proline 759 to asparagine 778, asparagine 805 to asparagine 824, threonine 847 to tyrosine 885, threonine 902 to phenylalanine 956, serine 979 to asparagine 990, isoleucine 1081 to asparagine 1149, and asparagine 1180 to asparagine 1262. Residues asparagine 1263 to asparagine 1273 show a composition bias toward basic residues. Composition is skewed to low complexity over residues serine 1288–serine 1303, aspartate 1320–asparagine 1338, asparagine 1359–asparagine 1386, and serine 1393–asparagine 1454. Residues leucine 1476–isoleucine 1744 form the Protein kinase domain. ATP is bound by residues isoleucine 1482 to valine 1490 and lysine 1503. The Proton acceptor role is filled by aspartate 1597.

It belongs to the protein kinase superfamily. TKL Ser/Thr protein kinase family.

It catalyses the reaction L-seryl-[protein] + ATP = O-phospho-L-seryl-[protein] + ADP + H(+). The catalysed reaction is L-threonyl-[protein] + ATP = O-phospho-L-threonyl-[protein] + ADP + H(+). This Dictyostelium discoideum (Social amoeba) protein is Probable serine/threonine-protein kinase DDB_G0282963.